Reading from the N-terminus, the 126-residue chain is Large ribosomal subunit protein mL52 (126 aa).

Residues 1–28 (MLKITKICLASSATSTAQRSIALTAPRA) constitute a mitochondrion transit peptide.

The protein belongs to the mitochondrion-specific ribosomal protein mL52 family. As to quaternary structure, component of the mitochondrial ribosome large subunit (39S) which comprises a 16S rRNA and about 50 distinct proteins.

The protein resides in the mitochondrion. The sequence is that of Large ribosomal subunit protein mL52 (mRpL52) from Drosophila melanogaster (Fruit fly).